The following is a 172-amino-acid chain: Adenine phosphoribosyltransferase (172 aa).

It belongs to the purine/pyrimidine phosphoribosyltransferase family. Homodimer.

The protein resides in the cytoplasm. The enzyme catalyses AMP + diphosphate = 5-phospho-alpha-D-ribose 1-diphosphate + adenine. It participates in purine metabolism; AMP biosynthesis via salvage pathway; AMP from adenine: step 1/1. Catalyzes a salvage reaction resulting in the formation of AMP, that is energically less costly than de novo synthesis. This is Adenine phosphoribosyltransferase from Clostridium tetani (strain Massachusetts / E88).